The sequence spans 632 residues: Serine/threonine-protein kinase plk-2 (632 aa).

Positions 1–26 (MQRVQPSAARVKSQKKEKAPPDVPDV) are disordered. One can recognise a Protein kinase domain in the interval 36-287 (YEKGKFLGKG…ARAVCRDHFF (252 aa)). Residues 42–50 (LGKGGFAHC) and lysine 65 contribute to the ATP site. Residue aspartate 159 is the Proton acceptor of the active site. A disordered region spans residues 313 to 334 (AEENVSPSGTIDQRGPHQAGRS). 2 consecutive POLO box domains span residues 405–484 (WISK…YMND) and 506–588 (TLRV…RLVE).

The protein belongs to the protein kinase superfamily. Ser/Thr protein kinase family. CDC5/Polo subfamily. In terms of assembly, interacts (via POLO box domain) with mex-5 and mex-6. Interacts (via POLO box domain) with him-8 (via N-terminus); the interaction mediates plk-2 recruitment to the pairing region of X chromosomes during meiosis. Interacts with sun-1. May interact with nicotinic acetylcholine receptor. It depends on Mg(2+) as a cofactor. In terms of tissue distribution, expressed in oocytes.

The protein localises to the nucleus. Its subcellular location is the cytoplasm. It is found in the cytoskeleton. It localises to the microtubule organizing center. The protein resides in the centrosome. The protein localises to the chromosome. Its subcellular location is the centromere. It is found in the kinetochore. The enzyme catalyses L-seryl-[protein] + ATP = O-phospho-L-seryl-[protein] + ADP + H(+). It carries out the reaction L-threonyl-[protein] + ATP = O-phospho-L-threonyl-[protein] + ADP + H(+). Functionally, serine/threonine-protein kinase which plays a role, during oogenesis, in chromosome pairing and synapsis, by facilitating the recruitment and attachment of meiotic chromosomes to the nuclear envelope during prophase. Promotes the localization of brc-1 to the short arm of homologous chromosomes during meiotic prophase I. Regulates the formation of sun-1 patches along the nuclear envelope. Promotes meiotic nuclei apoptosis in response to chromosomal asynapsis. Plays a redundant role with plk-1 in the establishment of cell polarity downstream of mex-5 and mex-6 during the first embryonic cell divisions. Plays a role in nicotinic acetylcholine receptor-mediated sensitivity to nicotine but not levamisole. Regulates motility. The protein is Serine/threonine-protein kinase plk-2 of Caenorhabditis elegans.